The chain runs to 337 residues: Phenylalanine--tRNA ligase alpha subunit (337 aa).

Residue Glu-258 coordinates Mg(2+).

This sequence belongs to the class-II aminoacyl-tRNA synthetase family. Phe-tRNA synthetase alpha subunit type 1 subfamily. In terms of assembly, tetramer of two alpha and two beta subunits. Requires Mg(2+) as cofactor.

It is found in the cytoplasm. It carries out the reaction tRNA(Phe) + L-phenylalanine + ATP = L-phenylalanyl-tRNA(Phe) + AMP + diphosphate + H(+). The chain is Phenylalanine--tRNA ligase alpha subunit from Burkholderia mallei (strain ATCC 23344).